A 677-amino-acid polypeptide reads, in one-letter code: Methionine--tRNA ligase (677 aa).

The 'HIGH' region motif lies at 15-25 (PYANGSIHLGH). Cys146, Cys149, Cys159, and Cys162 together coordinate Zn(2+). The 'KMSKS' region signature appears at 333–337 (KMSKS). Position 336 (Lys336) interacts with ATP. The 103-residue stretch at 575 to 677 (DFAKIDLRVA…DGAKPGQQVK (103 aa)) folds into the tRNA-binding domain.

The protein belongs to the class-I aminoacyl-tRNA synthetase family. MetG type 1 subfamily. As to quaternary structure, homodimer. It depends on Zn(2+) as a cofactor.

It localises to the cytoplasm. The catalysed reaction is tRNA(Met) + L-methionine + ATP = L-methionyl-tRNA(Met) + AMP + diphosphate. Its function is as follows. Is required not only for elongation of protein synthesis but also for the initiation of all mRNA translation through initiator tRNA(fMet) aminoacylation. The protein is Methionine--tRNA ligase of Salmonella paratyphi B (strain ATCC BAA-1250 / SPB7).